The sequence spans 322 residues: uncharacterized protein (322 aa).

A disordered region spans residues 269–289 (QDEEEEPRDERRPRRRLGKAQ).

This is an uncharacterized protein from Sinorhizobium fredii (strain NBRC 101917 / NGR234).